The chain runs to 395 residues: Chalcone synthase (395 aa).

Valine 2 carries the post-translational modification N-acetylvaline. Cysteine 169 is a catalytic residue.

This sequence belongs to the thiolase-like superfamily. Chalcone/stilbene synthases family.

It carries out the reaction (E)-4-coumaroyl-CoA + 3 malonyl-CoA + 3 H(+) = 2',4,4',6'-tetrahydroxychalcone + 3 CO2 + 4 CoA. The protein operates within secondary metabolite biosynthesis; flavonoid biosynthesis. Functionally, the primary product of this enzyme is 4,2',4',6'-tetrahydroxychalcone (also termed naringenin-chalcone or chalcone) which can under specific conditions spontaneously isomerize into naringenin. The protein is Chalcone synthase (CHS) of Cardamine amara (Large bitter-cress).